The sequence spans 370 residues: Chaperone protein DnaJ (370 aa).

In terms of domain architecture, J spans 5–70; that stretch reads DYYEVLGVSK…EKRSMYDRMG (66 aa). The segment at 134-212 adopts a CR-type zinc-finger fold; that stretch reads GVKKTITFTA…CHGSGVADRQ (79 aa). Residues C147, C150, C164, C167, C186, C189, C200, and C203 each coordinate Zn(2+). 4 CXXCXGXG motif repeats span residues 147–154, 164–171, 186–193, and 200–207; these read CDVCDGKG, CKTCHGSG, CGTCRGQG, and CHACHGSG. The segment at 351–370 is disordered; sequence DGEDSASSPKKKSFFDRLFD.

Belongs to the DnaJ family. Homodimer. Zn(2+) is required as a cofactor.

It localises to the cytoplasm. Functionally, participates actively in the response to hyperosmotic and heat shock by preventing the aggregation of stress-denatured proteins and by disaggregating proteins, also in an autonomous, DnaK-independent fashion. Unfolded proteins bind initially to DnaJ; upon interaction with the DnaJ-bound protein, DnaK hydrolyzes its bound ATP, resulting in the formation of a stable complex. GrpE releases ADP from DnaK; ATP binding to DnaK triggers the release of the substrate protein, thus completing the reaction cycle. Several rounds of ATP-dependent interactions between DnaJ, DnaK and GrpE are required for fully efficient folding. Also involved, together with DnaK and GrpE, in the DNA replication of plasmids through activation of initiation proteins. The polypeptide is Chaperone protein DnaJ (Acinetobacter baumannii (strain AB0057)).